The primary structure comprises 429 residues: Enolase (429 aa).

(2R)-2-phosphoglycerate is bound at residue Gln167. The Proton donor role is filled by Glu209. Mg(2+) is bound by residues Asp246, Glu289, and Asp316. Residues Lys341, Arg370, Ser371, and Lys392 each coordinate (2R)-2-phosphoglycerate. Residue Lys341 is the Proton acceptor of the active site.

It belongs to the enolase family. Component of the RNA degradosome, a multiprotein complex involved in RNA processing and mRNA degradation. Requires Mg(2+) as cofactor.

The protein localises to the cytoplasm. It localises to the secreted. It is found in the cell surface. The catalysed reaction is (2R)-2-phosphoglycerate = phosphoenolpyruvate + H2O. It participates in carbohydrate degradation; glycolysis; pyruvate from D-glyceraldehyde 3-phosphate: step 4/5. Functionally, catalyzes the reversible conversion of 2-phosphoglycerate (2-PG) into phosphoenolpyruvate (PEP). It is essential for the degradation of carbohydrates via glycolysis. In Pseudomonas entomophila (strain L48), this protein is Enolase.